The primary structure comprises 873 residues: MPYQCPITFNDEQLEICELKNQLEIFTQYQKSEFLNHHPVTDLVLLRSEYMDLLLNRLWEHFGFSKLPHIALVAVGGYGRGELHPLSDIDILIVSQRTLPSALGEKVSQFITLLWDLKLEVGHAVRTIAECIEIGSDDLTVATNLQESRLLCGSEDTFQELKLKIHSDSFWPSETFYKAKIQEQRERHARYHDTTYNLEPDIKSTPGGLRDIHTLSWVARRHFGATSLLEMSKYGFLTDAEYRELVECQDFLWRVRFALHIELRRYDNRLTFAHQAQVAEHLGYTGEGNRGVEMMMKEFYRTLRRVAELNKMLLKLFDQAIINGGQTQEAEILDNDFQRRGSLIEARKPALFQARPETILDMFIHIANDSTIEGVSPPTLRQLRTARRRLNRFLHTIPEARDKFMDLVRHPNALHKAFSLMHKLGVLSAYLPQWSQIVGQMQFDLFHVYTVDEHSIRLLKHINRFSQVENHDKHPICCEVYPRVQKKELLILAAIFHDIGKGRGGDHSEIGAVEAYSFCIEHGLSKPEAKQVAWLVQNHLLMSVTAQRRDIYDPDVITEFAKKVRDEESLELLVCLTVADICATNPELWNSWKRTLLAELFHSTQRALRRGLENPVDVRDRIRHNQQMASALLRKEGFSAREIEVLWQRFKADYFLRHTHTQIAWHCEHLLRLEDPSQPLVLISKKATRGGTEVFVYCKDQAALFATVVAELDRRNFNVHDAQVMVSKDGHVLDTFIVLDQHGEAIDEARHKAVAKHLTHVLADGRPTKIKTRRTPRNLQHFKVKTRVEFLPTKSKKRTLMELRALDTPGLLAQVGATFAELDINLHGAKITTIGERAEDLFILTSDAGGRLSEEQEQALRERLTEHVSELAP.

The segment at 1 to 332 is uridylyltransferase; that stretch reads MPYQCPITFN…NGGQTQEAEI (332 aa). A uridylyl-removing region spans residues 333-692; the sequence is LDNDFQRRGS…ISKKATRGGT (360 aa). In terms of domain architecture, HD spans 451 to 573; it reads VDEHSIRLLK…VRDEESLELL (123 aa). ACT domains follow at residues 693–777 and 800–873; these read EVFV…RTPR and LMEL…ELAP.

This sequence belongs to the GlnD family. It depends on Mg(2+) as a cofactor.

The enzyme catalyses [protein-PII]-L-tyrosine + UTP = [protein-PII]-uridylyl-L-tyrosine + diphosphate. It carries out the reaction [protein-PII]-uridylyl-L-tyrosine + H2O = [protein-PII]-L-tyrosine + UMP + H(+). With respect to regulation, uridylyltransferase (UTase) activity is inhibited by glutamine, while glutamine activates uridylyl-removing (UR) activity. In terms of biological role, modifies, by uridylylation and deuridylylation, the PII regulatory proteins (GlnB and homologs), in response to the nitrogen status of the cell that GlnD senses through the glutamine level. Under low glutamine levels, catalyzes the conversion of the PII proteins and UTP to PII-UMP and PPi, while under higher glutamine levels, GlnD hydrolyzes PII-UMP to PII and UMP (deuridylylation). Thus, controls uridylylation state and activity of the PII proteins, and plays an important role in the regulation of nitrogen assimilation and metabolism. The sequence is that of Bifunctional uridylyltransferase/uridylyl-removing enzyme from Vibrio atlanticus (strain LGP32) (Vibrio splendidus (strain Mel32)).